A 190-amino-acid chain; its full sequence is Imidazole glycerol phosphate synthase subunit HisH (190 aa).

Residues 2–190 form the Glutamine amidotransferase type-1 domain; it reads IVGVVDYTVG…IKRFLAVAKR (189 aa). The Nucleophile role is filled by Cys73. Residues His169 and Glu171 contribute to the active site.

In terms of assembly, heterodimer of HisH and HisF.

It is found in the cytoplasm. The catalysed reaction is 5-[(5-phospho-1-deoxy-D-ribulos-1-ylimino)methylamino]-1-(5-phospho-beta-D-ribosyl)imidazole-4-carboxamide + L-glutamine = D-erythro-1-(imidazol-4-yl)glycerol 3-phosphate + 5-amino-1-(5-phospho-beta-D-ribosyl)imidazole-4-carboxamide + L-glutamate + H(+). The enzyme catalyses L-glutamine + H2O = L-glutamate + NH4(+). It functions in the pathway amino-acid biosynthesis; L-histidine biosynthesis; L-histidine from 5-phospho-alpha-D-ribose 1-diphosphate: step 5/9. IGPS catalyzes the conversion of PRFAR and glutamine to IGP, AICAR and glutamate. The HisH subunit catalyzes the hydrolysis of glutamine to glutamate and ammonia as part of the synthesis of IGP and AICAR. The resulting ammonia molecule is channeled to the active site of HisF. This Pyrobaculum aerophilum (strain ATCC 51768 / DSM 7523 / JCM 9630 / CIP 104966 / NBRC 100827 / IM2) protein is Imidazole glycerol phosphate synthase subunit HisH.